A 335-amino-acid polypeptide reads, in one-letter code: Anthranilate phosphoribosyltransferase 2 (335 aa).

Residues Gly70, 73–74, Thr78, 80–83, 98–106, and Ser110 each bind 5-phospho-alpha-D-ribose 1-diphosphate; these read GD, NIST, and KHGNRSASS. Gly70 contributes to the anthranilate binding site. A Mg(2+)-binding site is contributed by Ser82. Position 101 (Asn101) interacts with anthranilate. Arg156 lines the anthranilate pocket. Mg(2+)-binding residues include Asp215 and Glu216.

It belongs to the anthranilate phosphoribosyltransferase family. In terms of assembly, homodimer. Mg(2+) is required as a cofactor.

The catalysed reaction is N-(5-phospho-beta-D-ribosyl)anthranilate + diphosphate = 5-phospho-alpha-D-ribose 1-diphosphate + anthranilate. The protein operates within amino-acid biosynthesis; L-tryptophan biosynthesis; L-tryptophan from chorismate: step 2/5. Its function is as follows. Catalyzes the transfer of the phosphoribosyl group of 5-phosphorylribose-1-pyrophosphate (PRPP) to anthranilate to yield N-(5'-phosphoribosyl)-anthranilate (PRA). This is Anthranilate phosphoribosyltransferase 2 from Streptomyces coelicolor (strain ATCC BAA-471 / A3(2) / M145).